A 332-amino-acid polypeptide reads, in one-letter code: mRNA-decapping enzyme 1 (332 aa).

Positions 141-173 (ARAAKAASEAPQASVPAPTQAPAAPAQAPQMAP) are enriched in low complexity. The interval 141 to 175 (ARAAKAASEAPQASVPAPTQAPAAPAQAPQMAPQA) is disordered.

This sequence belongs to the DCP1 family. In terms of assembly, may be a component of the decapping complex composed of dcap-1 and dcap-2. As to expression, expressed in neurons including touch receptor neurons and motor neurons.

It is found in the cytoplasm. The protein localises to the cytoplasmic granule. Its function is as follows. Component of the decapping complex necessary for the degradation of mRNAs, both in normal mRNA turnover and in nonsense-mediated mRNA decay. In contrast to orthologs, does not possess decapping activity and does not remove the 7-methyl guanine cap structure from mRNA molecules. In the nervous system, negatively regulates the expression of insulin-like peptide ins-7, which in turn promotes longevity. This may in part be through promoting the activity of daf-16 in distal tissues. Required for the developmental axon guidance and regrowth of PLM touch receptor neurons. In ADL sensory neurons, plays a role in ciliary shape formation. Acts in neurons to promote larval survival at high temperatures by negatively regulating lin-14 expression. The sequence is that of mRNA-decapping enzyme 1 from Caenorhabditis elegans.